The following is a 483-amino-acid chain: Isocitrate dehydrogenase [NADP] (483 aa).

T74 lines the NADP(+) pocket. D-threo-isocitrate is bound by residues S83, N85, R89, R99, and R121. D232 serves as a coordination point for Mg(2+). Residues H264 to I270 and N277 each bind NADP(+).

This sequence belongs to the isocitrate and isopropylmalate dehydrogenases family. In terms of assembly, homodimer. It depends on Mg(2+) as a cofactor. Mn(2+) is required as a cofactor.

It catalyses the reaction D-threo-isocitrate + NADP(+) = 2-oxoglutarate + CO2 + NADPH. Catalyzes the oxidative decarboxylation of isocitrate to 2-oxoglutarate and carbon dioxide with the concomitant reduction of NADP(+). This is Isocitrate dehydrogenase [NADP] (icd) from Rickettsia felis (strain ATCC VR-1525 / URRWXCal2) (Rickettsia azadi).